The primary structure comprises 309 residues: Probable manganese-dependent inorganic pyrophosphatase (309 aa).

Mn(2+) contacts are provided by His9, Asp13, Asp15, Asp75, His97, and Asp149.

This sequence belongs to the PPase class C family. Mn(2+) serves as cofactor.

It is found in the cytoplasm. It catalyses the reaction diphosphate + H2O = 2 phosphate + H(+). This Staphylococcus haemolyticus (strain JCSC1435) protein is Probable manganese-dependent inorganic pyrophosphatase.